The sequence spans 306 residues: Ethylmalonyl-CoA decarboxylase (306 aa).

K216 is subject to N6-acetyllysine; alternate. K216 is modified (N6-succinyllysine; alternate).

It belongs to the enoyl-CoA hydratase/isomerase family.

Its subcellular location is the cytoplasm. The protein resides in the cytosol. It catalyses the reaction (2S)-ethylmalonyl-CoA + H(+) = butanoyl-CoA + CO2. The catalysed reaction is (S)-methylmalonyl-CoA + H(+) = propanoyl-CoA + CO2. The enzyme catalyses (2R)-ethylmalonyl-CoA + H(+) = butanoyl-CoA + CO2. In terms of biological role, decarboxylates ethylmalonyl-CoA, a potentially toxic metabolite, to form butyryl-CoA, suggesting it might be involved in metabolite proofreading. Acts preferentially on (S)-ethylmalonyl-CoA but also has some activity on the (R)-isomer. Also has methylmalonyl-CoA decarboxylase activity at lower level. The sequence is that of Ethylmalonyl-CoA decarboxylase (ECHDC1) from Bos taurus (Bovine).